We begin with the raw amino-acid sequence, 430 residues long: KICSTOR complex protein kaptin (430 aa).

A disordered region spans residues 410–430 (RKHQQGLGDRVGPRPVEHPAS). Residues 420-430 (VGPRPVEHPAS) show a composition bias toward basic and acidic residues.

As to quaternary structure, part of the KICSTOR complex composed of KPTN, ITFG2, KICS2 and SZT2. SZT2 probably serves as a link between the other three proteins in the KICSTOR complex and mediates the direct interaction with the GATOR1 complex. May associate with F-actin filaments.

Its subcellular location is the lysosome membrane. It localises to the cell projection. It is found in the lamellipodium. The protein localises to the stereocilium. Functionally, as part of the KICSTOR complex functions in the amino acid-sensing branch of the TORC1 signaling pathway. Recruits, in an amino acid-independent manner, the GATOR1 complex to the lysosomal membranes and allows its interaction with GATOR2 and the RAG GTPases. Functions upstream of the RAG GTPases and is required to negatively regulate mTORC1 signaling in absence of amino acids. In absence of the KICSTOR complex mTORC1 is constitutively localized to the lysosome and activated. The KICSTOR complex is also probably involved in the regulation of mTORC1 by glucose. This chain is KICSTOR complex protein kaptin, found in Mus musculus (Mouse).